The chain runs to 157 residues: Protein Smg (157 aa).

It belongs to the Smg family.

The chain is Protein Smg from Shigella boydii serotype 4 (strain Sb227).